A 525-amino-acid chain; its full sequence is Probable protein kinase UbiB (525 aa).

Positions 118 to 500 constitute a Protein kinase domain; it reads DFERVPVASA…QKRTNRLLQG (383 aa). ATP-binding positions include 124–132 and lysine 150; that span reads VASASIAQV. Aspartate 285 acts as the Proton acceptor in catalysis. A helical transmembrane segment spans residues 501–521; the sequence is LLLFGVAVGVGAALARVFLAL.

Belongs to the ABC1 family. UbiB subfamily.

Its subcellular location is the cell inner membrane. It participates in cofactor biosynthesis; ubiquinone biosynthesis [regulation]. In terms of biological role, is probably a protein kinase regulator of UbiI activity which is involved in aerobic coenzyme Q (ubiquinone) biosynthesis. This chain is Probable protein kinase UbiB, found in Paraburkholderia xenovorans (strain LB400).